Consider the following 85-residue polypeptide: Large ribosomal subunit protein bL27 (85 aa).

The segment at 1-20 (MAHKKAGGSTRNGRDSEAKR) is disordered.

It belongs to the bacterial ribosomal protein bL27 family.

The protein is Large ribosomal subunit protein bL27 of Citrobacter koseri (strain ATCC BAA-895 / CDC 4225-83 / SGSC4696).